Reading from the N-terminus, the 294-residue chain is Dof zinc finger protein DOF4.1 (294 aa).

Residues 68 to 122 form a Dof-type zinc finger; sequence RNCPRCNSSNTKFCYYNNYSLAQPRYLCKSCRRYWTEGGSLRNVPVGGGSRKNKK. Residues C70, C73, C95, and C98 each contribute to the Zn(2+) site. Disordered stretches follow at residues 109-178 and 247-294; these read RNVP…DKRA and MYPY…GPTW. Composition is skewed to polar residues over residues 126-136 and 157-173; these read PNSSTSSSTKN and KTHQNNNDLSLSFSSPM. The span at 251–273 shows a compositional bias: basic and acidic residues; it reads GDHEDRQQHHHVRHDDGNKKREG. Residues 284-294 are compositionally biased toward gly residues; that stretch reads ILGGDSGGPTW.

The protein localises to the nucleus. In terms of biological role, transcription factor that binds specifically to a 5'-AA[AG]G-3' consensus core sequence. This Arabidopsis thaliana (Mouse-ear cress) protein is Dof zinc finger protein DOF4.1 (DOF4.1).